Consider the following 412-residue polypeptide: Argininosuccinate synthase (412 aa).

Residues 10 to 18 (AYSGGLDTS) and Ala36 each bind ATP. L-citrulline-binding residues include Tyr87 and Ser92. Residue Tyr87 is modified to Phosphotyrosine. Position 112 is an N6-acetyllysine (Lys112). Residue Tyr113 is modified to Phosphotyrosine. Position 115–123 (115–123 (SHGATGKGN)) interacts with ATP. Positions 119, 123, and 124 each coordinate L-aspartate. Asn123 contributes to the L-citrulline binding site. Arg127 contacts L-citrulline. Residues Lys165 and Lys176 each carry the N6-acetyllysine; by CLOCK modification. Phosphoserine is present on residues Ser177 and Ser180. The L-citrulline site is built by Ser180 and Ser189. Thr219 is modified (phosphothreonine). Positions 270 and 282 each coordinate L-citrulline.

The protein belongs to the argininosuccinate synthase family. Type 1 subfamily. As to quaternary structure, homotetramer. Interacts with NMRAL1. Interacts with CLOCK; in a circadian manner. Forms tissue-specific complexes with ASL, SLC7A1, HSP90AA1 and nitric oxide synthase NOS1, NOS2 or NOS3; the complex regulates cell-autonomous L-arginine synthesis and citrulline recycling while channeling extracellular L-arginine to nitric oxide synthesis pathway. Acetylated by CLOCK in a circadian manner which negatively regulates its enzyme activity. Deacetylated by histone deacetylases.

Its subcellular location is the cytoplasm. It localises to the cytosol. The enzyme catalyses L-citrulline + L-aspartate + ATP = 2-(N(omega)-L-arginino)succinate + AMP + diphosphate + H(+). Its pathway is amino-acid biosynthesis; L-arginine biosynthesis; L-arginine from L-ornithine and carbamoyl phosphate: step 2/3. The protein operates within nitrogen metabolism; urea cycle; (N(omega)-L-arginino)succinate from L-aspartate and L-citrulline: step 1/1. Functionally, one of the enzymes of the urea cycle, the metabolic pathway transforming neurotoxic amonia produced by protein catabolism into inocuous urea in the liver of ureotelic animals. Catalyzes the formation of arginosuccinate from aspartate, citrulline and ATP and together with ASL it is responsible for the biosynthesis of arginine in most body tissues. Indirectly, may be involved in the control of blood pressure. In Rattus norvegicus (Rat), this protein is Argininosuccinate synthase.